The following is a 220-amino-acid chain: Ribosomal RNA large subunit methyltransferase E (220 aa).

5 residues coordinate S-adenosyl-L-methionine: Gly60, Trp62, Asp92, Asp108, and Asp133. The active-site Proton acceptor is Lys173. Positions 197–220 (RKPKASRDKSSETFILGRQLKQPR) are disordered.

The protein belongs to the class I-like SAM-binding methyltransferase superfamily. RNA methyltransferase RlmE family.

The protein localises to the cytoplasm. The catalysed reaction is uridine(2552) in 23S rRNA + S-adenosyl-L-methionine = 2'-O-methyluridine(2552) in 23S rRNA + S-adenosyl-L-homocysteine + H(+). Functionally, specifically methylates the uridine in position 2552 of 23S rRNA at the 2'-O position of the ribose in the fully assembled 50S ribosomal subunit. The chain is Ribosomal RNA large subunit methyltransferase E from Burkholderia ambifaria (strain MC40-6).